The following is a 324-amino-acid chain: uncharacterized protein (324 aa).

This is an uncharacterized protein from Methanocaldococcus jannaschii (strain ATCC 43067 / DSM 2661 / JAL-1 / JCM 10045 / NBRC 100440) (Methanococcus jannaschii).